A 484-amino-acid chain; its full sequence is Aspartyl/glutamyl-tRNA(Asn/Gln) amidotransferase subunit B (484 aa).

The protein belongs to the GatB/GatE family. GatB subfamily. As to quaternary structure, heterotrimer of A, B and C subunits.

The enzyme catalyses L-glutamyl-tRNA(Gln) + L-glutamine + ATP + H2O = L-glutaminyl-tRNA(Gln) + L-glutamate + ADP + phosphate + H(+). The catalysed reaction is L-aspartyl-tRNA(Asn) + L-glutamine + ATP + H2O = L-asparaginyl-tRNA(Asn) + L-glutamate + ADP + phosphate + 2 H(+). In terms of biological role, allows the formation of correctly charged Asn-tRNA(Asn) or Gln-tRNA(Gln) through the transamidation of misacylated Asp-tRNA(Asn) or Glu-tRNA(Gln) in organisms which lack either or both of asparaginyl-tRNA or glutaminyl-tRNA synthetases. The reaction takes place in the presence of glutamine and ATP through an activated phospho-Asp-tRNA(Asn) or phospho-Glu-tRNA(Gln). This Bordetella parapertussis (strain 12822 / ATCC BAA-587 / NCTC 13253) protein is Aspartyl/glutamyl-tRNA(Asn/Gln) amidotransferase subunit B.